Consider the following 623-residue polypeptide: V-type proton ATPase catalytic subunit A (623 aa).

252–259 (GAFGCGKT) is an ATP binding site.

Belongs to the ATPase alpha/beta chains family. V-ATPase is a heteromultimeric enzyme composed of a peripheral catalytic V1 complex (main components: subunits A, B, C, D, E, and F) attached to an integral membrane V0 proton pore complex (main component: the proteolipid protein).

It catalyses the reaction ATP + H2O + 4 H(+)(in) = ADP + phosphate + 5 H(+)(out). Its function is as follows. Catalytic subunit of the peripheral V1 complex of vacuolar ATPase. V-ATPase vacuolar ATPase is responsible for acidifying a variety of intracellular compartments in eukaryotic cells. The chain is V-type proton ATPase catalytic subunit A from Beta vulgaris (Sugar beet).